A 306-amino-acid polypeptide reads, in one-letter code: Heme A synthase (306 aa).

The Cytoplasmic segment spans residues 1–5 (MKALR). Residues 6-26 (AVSLANTAVMLLAVLWGAWVT) traverse the membrane as a helical segment. Residues 27–56 (SSDSGDGCGASWPLCKGTFMPDWDYAAIVE) are Extracellular-facing. Cysteines 34 and 41 form a disulfide. Residue Glu-56 is part of the active site. A helical transmembrane segment spans residues 57-77 (FGHRVVSALAGLLSVAVLVWV). His-59 contacts heme o. Residues 78–89 (ARVRPSETRLKR) are Cytoplasmic-facing. The helical transmembrane segment at 90–110 (LAFGTFFFVVLQGGLGAAAVL) threads the bilayer. At 111–116 (RPQPDL) the chain is on the extracellular side. A helical membrane pass occupies residues 117-137 (VMALHFGFSLLCFTFALLVTV). His-121 contacts heme o. The Cytoplasmic segment spans residues 138 to 164 (ALGQGERAAFQRPDVSAQPVAPGLRTQ). The chain crosses the membrane as a helical span at residues 165-185 (IWGLAVYTYLVVYLGAYVRHL). Over 186-206 (GASMACTGWPLCNGELIPPLY) the chain is Extracellular. An intrachain disulfide couples Cys-191 to Cys-197. A helical membrane pass occupies residues 207-227 (GPVGANFAHRLGAALAVVLVL). His-215 lines the heme b pocket. Residues 228 to 247 (RLWWTARRLTERDDLRRGAA) are Cytoplasmic-facing. A helical membrane pass occupies residues 248 to 268 (WALALMAAQVASGALFPLGYL). Topologically, residues 269–277 (NLLTQLLHT) are extracellular. His-276 is a heme b binding site. A helical membrane pass occupies residues 278-298 (GLITGFWGVLSYLCYLTLPVG). Over 299–306 (RETVAVSA) the chain is Cytoplasmic.

It belongs to the COX15/CtaA family. Type 1 subfamily. As to quaternary structure, interacts with CtaB. It depends on heme b as a cofactor.

It localises to the cell membrane. It carries out the reaction Fe(II)-heme o + 2 A + H2O = Fe(II)-heme a + 2 AH2. It functions in the pathway porphyrin-containing compound metabolism; heme A biosynthesis; heme A from heme O: step 1/1. Catalyzes the conversion of heme O to heme A by two successive hydroxylations of the methyl group at C8. The first hydroxylation forms heme I, the second hydroxylation results in an unstable dihydroxymethyl group, which spontaneously dehydrates, resulting in the formyl group of heme A. The chain is Heme A synthase from Symbiobacterium thermophilum (strain DSM 24528 / JCM 14929 / IAM 14863 / T).